The following is a 349-amino-acid chain: Alpha-centractin (349 aa).

N-acetylmethionine is present on methionine 1.

It belongs to the actin family. ARP1 subfamily. Part of the ACTR1A/ACTB filament around which the dynactin complex is built. The filament contains 8 copies of ACTR1A and 1 ACTB. Interacts with dynein and adapters such as BICD2. Interacts with BCCIP (isoform 2/alpha).

The protein resides in the cytoplasm. The protein localises to the cytoskeleton. It is found in the microtubule organizing center. It localises to the centrosome. Its subcellular location is the cell cortex. Part of the ACTR1A/ACTB filament around which the dynactin complex is built. The dynactin multiprotein complex activates the molecular motor dynein for ultra-processive transport along microtubules. This chain is Alpha-centractin (ACTR1A), found in Sus scrofa (Pig).